A 487-amino-acid polypeptide reads, in one-letter code: GTPase Der (487 aa).

2 consecutive EngA-type G domains span residues 3-167 (LTLA…DEME) and 203-378 (LQVA…EVWN). GTP-binding positions include 9-16 (GRPNVGKS), 56-60 (DTAGL), and 119-122 (NKAE). A compositionally biased stretch (acidic residues) spans 167-190 (EQQAEEQAPETDVDLDPEDEDGEE). The interval 167–191 (EQQAEEQAPETDVDLDPEDEDGEEV) is disordered. GTP contacts are provided by residues 209–216 (GRPNAGKS), 256–260 (DTAGM), and 321–324 (NKWD). Residues 379 to 465 (RRIPTAALNR…RLTLRGQGDK (87 aa)) form the KH-like domain. A disordered region spans residues 458 to 487 (TLRGQGDKNPYKGRRKKNAGALAKHLKSRG). The span at 468–487 (YKGRRKKNAGALAKHLKSRG) shows a compositional bias: basic residues.

The protein belongs to the TRAFAC class TrmE-Era-EngA-EngB-Septin-like GTPase superfamily. EngA (Der) GTPase family. As to quaternary structure, associates with the 50S ribosomal subunit.

GTPase that plays an essential role in the late steps of ribosome biogenesis. The protein is GTPase Der of Ruegeria pomeroyi (strain ATCC 700808 / DSM 15171 / DSS-3) (Silicibacter pomeroyi).